Consider the following 365-residue polypeptide: tRNA/tmRNA (uracil-C(5))-methyltransferase (365 aa).

The S-adenosyl-L-methionine site is built by Gln189, Tyr217, Asn222, Glu238, and Asp298. Cys323 acts as the Nucleophile in catalysis. The active-site Proton acceptor is the Glu357.

This sequence belongs to the class I-like SAM-binding methyltransferase superfamily. RNA M5U methyltransferase family. TrmA subfamily.

The enzyme catalyses uridine(54) in tRNA + S-adenosyl-L-methionine = 5-methyluridine(54) in tRNA + S-adenosyl-L-homocysteine + H(+). The catalysed reaction is uridine(341) in tmRNA + S-adenosyl-L-methionine = 5-methyluridine(341) in tmRNA + S-adenosyl-L-homocysteine + H(+). Dual-specificity methyltransferase that catalyzes the formation of 5-methyluridine at position 54 (m5U54) in all tRNAs, and that of position 341 (m5U341) in tmRNA (transfer-mRNA). The sequence is that of tRNA/tmRNA (uracil-C(5))-methyltransferase from Shewanella halifaxensis (strain HAW-EB4).